Here is a 112-residue protein sequence, read N- to C-terminus: uncharacterized protein (112 aa).

This is an uncharacterized protein from Saccharomyces cerevisiae (strain ATCC 204508 / S288c) (Baker's yeast).